The chain runs to 329 residues: Glucokinase (329 aa).

13-18 (GDIGGT) is an ATP binding site.

This sequence belongs to the bacterial glucokinase family.

The protein localises to the cytoplasm. It catalyses the reaction D-glucose + ATP = D-glucose 6-phosphate + ADP + H(+). This Caulobacter sp. (strain K31) protein is Glucokinase.